Reading from the N-terminus, the 593-residue chain is Proteasome-associated ATPase (593 aa).

Positions 5–94 (DDADSRAARW…KEEIDRLAQP (90 aa)) form a coiled coil. Residue 281 to 286 (GCGKTL) participates in ATP binding. The interval 574 to 593 (GKGADAGRSIETASNTGQYL) is disordered. Over residues 584–593 (ETASNTGQYL) the composition is skewed to polar residues. The tract at residues 592–593 (YL) is docks into pockets in the proteasome alpha-ring.

The protein belongs to the AAA ATPase family. Homohexamer. Assembles into a hexameric ring structure that caps the 20S proteasome core. Strongly interacts with the prokaryotic ubiquitin-like protein Pup through a hydrophobic interface; the interacting region of ARC lies in its N-terminal coiled-coil domain. There is one Pup binding site per ARC hexamer ring. Upon ATP-binding, the C-terminus of ARC interacts with the alpha-rings of the proteasome core, possibly by binding to the intersubunit pockets.

It participates in protein degradation; proteasomal Pup-dependent pathway. Functionally, ATPase which is responsible for recognizing, binding, unfolding and translocation of pupylated proteins into the bacterial 20S proteasome core particle. May be essential for opening the gate of the 20S proteasome via an interaction with its C-terminus, thereby allowing substrate entry and access to the site of proteolysis. Thus, the C-termini of the proteasomal ATPase may function like a 'key in a lock' to induce gate opening and therefore regulate proteolysis. The polypeptide is Proteasome-associated ATPase (Salinispora tropica (strain ATCC BAA-916 / DSM 44818 / JCM 13857 / NBRC 105044 / CNB-440)).